We begin with the raw amino-acid sequence, 200 residues long: Rho-related protein racD (200 aa).

The GTP site is built by A20, G22, K23, T24, C25, Y39, and T42. T24 contacts Mg(2+). 2 short sequence motifs (switch) span residues 33 to 44 (NEFPKDYVPTVF) and 64 to 82 (DTAG…YPNT). A Mg(2+)-binding site is contributed by T42. GTP-binding residues include K123, D125, and A166. C197 is subject to Cysteine methyl ester. C197 carries S-geranylgeranyl cysteine lipidation. Positions 198-200 (ALL) are cleaved as a propeptide — removed in mature form.

The protein belongs to the small GTPase superfamily. Rho family. Requires Mg(2+) as cofactor.

Its subcellular location is the cell membrane. It localises to the cytoplasm. The protein localises to the cytoskeleton. The enzyme catalyses GTP + H2O = GDP + phosphate + H(+). With respect to regulation, regulated by guanine nucleotide exchange factors (GEFs) which promote the exchange of bound GDP for free GTP, GTPase activating proteins (GAPs) which increase the GTP hydrolysis activity, and GDP dissociation inhibitors which inhibit the dissociation of the nucleotide from the GTPase. In terms of biological role, small GTPase which cycles between active GTP-bound and inactive GDP-bound states. The polypeptide is Rho-related protein racD (Entamoeba histolytica (strain ATCC 30459 / HM-1:IMSS / ABRM)).